The following is a 950-amino-acid chain: Bifunctional glutamine synthetase adenylyltransferase/adenylyl-removing enzyme (950 aa).

The adenylyl removase stretch occupies residues Met-1 to Ala-440. The tract at residues His-449 to Val-950 is adenylyl transferase.

Belongs to the GlnE family. Requires Mg(2+) as cofactor.

The catalysed reaction is [glutamine synthetase]-O(4)-(5'-adenylyl)-L-tyrosine + phosphate = [glutamine synthetase]-L-tyrosine + ADP. The enzyme catalyses [glutamine synthetase]-L-tyrosine + ATP = [glutamine synthetase]-O(4)-(5'-adenylyl)-L-tyrosine + diphosphate. Functionally, involved in the regulation of glutamine synthetase GlnA, a key enzyme in the process to assimilate ammonia. When cellular nitrogen levels are high, the C-terminal adenylyl transferase (AT) inactivates GlnA by covalent transfer of an adenylyl group from ATP to specific tyrosine residue of GlnA, thus reducing its activity. Conversely, when nitrogen levels are low, the N-terminal adenylyl removase (AR) activates GlnA by removing the adenylyl group by phosphorolysis, increasing its activity. The regulatory region of GlnE binds the signal transduction protein PII (GlnB) which indicates the nitrogen status of the cell. This chain is Bifunctional glutamine synthetase adenylyltransferase/adenylyl-removing enzyme, found in Yersinia enterocolitica serotype O:8 / biotype 1B (strain NCTC 13174 / 8081).